A 499-amino-acid chain; its full sequence is NAD(P)H-quinone oxidoreductase chain 4, chloroplastic (499 aa).

Helical transmembrane passes span Leu4–Phe24, Met31–Phe51, Ile87–Val107, Leu113–Ala130, Ile134–Met154, Phe167–Leu187, Ile211–His231, His242–Ile262, Ser274–Thr294, Ile305–Tyr325, Gly330–Gly350, Leu386–Thr406, Ile416–Met436, and Leu462–Val482.

Belongs to the complex I subunit 4 family.

The protein resides in the plastid. It is found in the chloroplast thylakoid membrane. It catalyses the reaction a plastoquinone + NADH + (n+1) H(+)(in) = a plastoquinol + NAD(+) + n H(+)(out). The catalysed reaction is a plastoquinone + NADPH + (n+1) H(+)(in) = a plastoquinol + NADP(+) + n H(+)(out). This Cryptomeria japonica (Japanese cedar) protein is NAD(P)H-quinone oxidoreductase chain 4, chloroplastic.